The following is a 498-amino-acid chain: Calcium uptake protein, mitochondrial (498 aa).

The N-terminal 29 residues, 1–29 (MPALSHYRSVSSLPSVDRSFLLIQRLRIH), are a transit peptide targeting the mitochondrion. 4 consecutive EF-hand domains span residues 216-241 (EFFM…VTLL), 243-278 (IPES…MRSQ), 329-364 (LTEE…AADA), and 437-472 (LSDN…RERD). Asp-222, Asp-224, Asp-226, Glu-233, Asp-256, Asp-258, Asn-260, Glu-262, and Glu-267 together coordinate Ca(2+). Ca(2+)-binding residues include Asp-450, Asn-452, Asp-454, Asn-456, and Glu-461.

The protein belongs to the MICU1 family. MICU1 subfamily. In terms of tissue distribution, expressed in both green and non-green tissues, including roots, shoots, floral buds and pollen.

Its subcellular location is the mitochondrion inner membrane. It localises to the mitochondrion intermembrane space. In terms of biological role, calcium-binding protein maintaining matrix calcium levels at low concentration. Regulates mitochondrial calcium dynamics in planta by restricting influx. This chain is Calcium uptake protein, mitochondrial, found in Arabidopsis thaliana (Mouse-ear cress).